Here is a 298-residue protein sequence, read N- to C-terminus: Homoserine kinase (298 aa).

An ATP-binding site is contributed by P83–T93.

It belongs to the GHMP kinase family. Homoserine kinase subfamily.

It is found in the cytoplasm. It catalyses the reaction L-homoserine + ATP = O-phospho-L-homoserine + ADP + H(+). It participates in amino-acid biosynthesis; L-threonine biosynthesis; L-threonine from L-aspartate: step 4/5. In terms of biological role, catalyzes the ATP-dependent phosphorylation of L-homoserine to L-homoserine phosphate. In Clostridium beijerinckii (strain ATCC 51743 / NCIMB 8052) (Clostridium acetobutylicum), this protein is Homoserine kinase.